Reading from the N-terminus, the 885-residue chain is Dual serine/threonine and tyrosine protein kinase (885 aa).

Residues proline 614 to leucine 868 enclose the Protein kinase domain. Residues leucine 620–valine 628 and lysine 643 each bind ATP. Aspartate 739 acts as the Proton acceptor in catalysis.

It belongs to the protein kinase superfamily. Ser/Thr protein kinase family.

It is found in the cytoplasm. The protein localises to the cell membrane. The protein resides in the apical cell membrane. Its subcellular location is the basolateral cell membrane. It localises to the cell junction. The catalysed reaction is L-seryl-[protein] + ATP = O-phospho-L-seryl-[protein] + ADP + H(+). It catalyses the reaction L-threonyl-[protein] + ATP = O-phospho-L-threonyl-[protein] + ADP + H(+). The enzyme catalyses L-tyrosyl-[protein] + ATP = O-phospho-L-tyrosyl-[protein] + ADP + H(+). In terms of biological role, may act as a positive regulator of ERK phosphorylation downstream of fibroblast growth factor-receptor activation. May induce both caspase-dependent apoptosis and caspase-independent cell death. Plays a role in the embryonic development. This Danio rerio (Zebrafish) protein is Dual serine/threonine and tyrosine protein kinase (dstyk).